The chain runs to 371 residues: tRNA (guanine(26)-N(2))-dimethyltransferase (371 aa).

Positions 4–368 (VEVTEGRTRF…APLPVLEKVV (365 aa)) constitute a Trm1 methyltransferase domain. Residues Arg-41, Arg-66, Asp-82, Asp-108, and Ala-109 each coordinate S-adenosyl-L-methionine. Residues Cys-237, Cys-240, Cys-256, and Cys-259 each contribute to the Zn(2+) site.

Belongs to the class I-like SAM-binding methyltransferase superfamily. Trm1 family.

The enzyme catalyses guanosine(26) in tRNA + 2 S-adenosyl-L-methionine = N(2)-dimethylguanosine(26) in tRNA + 2 S-adenosyl-L-homocysteine + 2 H(+). Functionally, dimethylates a single guanine residue at position 26 of a number of tRNAs using S-adenosyl-L-methionine as donor of the methyl groups. The chain is tRNA (guanine(26)-N(2))-dimethyltransferase from Methanoculleus marisnigri (strain ATCC 35101 / DSM 1498 / JR1).